Reading from the N-terminus, the 549-residue chain is Glucose-6-phosphate isomerase (549 aa).

Catalysis depends on Glu355, which acts as the Proton donor. Active-site residues include His386 and Lys514.

This sequence belongs to the GPI family.

It localises to the cytoplasm. The enzyme catalyses alpha-D-glucose 6-phosphate = beta-D-fructose 6-phosphate. It functions in the pathway carbohydrate biosynthesis; gluconeogenesis. It participates in carbohydrate degradation; glycolysis; D-glyceraldehyde 3-phosphate and glycerone phosphate from D-glucose: step 2/4. In terms of biological role, catalyzes the reversible isomerization of glucose-6-phosphate to fructose-6-phosphate. The chain is Glucose-6-phosphate isomerase from Klebsiella pneumoniae (strain 342).